A 64-amino-acid chain; its full sequence is Small ribosomal subunit protein bS18c (64 aa).

It belongs to the bacterial ribosomal protein bS18 family. Part of the 30S ribosomal subunit.

It localises to the plastid. It is found in the chloroplast. This chain is Small ribosomal subunit protein bS18c (rps18), found in Bigelowiella natans (Pedinomonas minutissima).